A 206-amino-acid polypeptide reads, in one-letter code: Oligoribonuclease (206 aa).

Residues 20 to 183 form the Exonuclease domain; it reads LVWLDMEMTG…ADIHESIDEL (164 aa). Tyrosine 141 is an active-site residue.

It belongs to the oligoribonuclease family.

It is found in the cytoplasm. Its function is as follows. 3'-to-5' exoribonuclease specific for small oligoribonucleotides. This Burkholderia lata (strain ATCC 17760 / DSM 23089 / LMG 22485 / NCIMB 9086 / R18194 / 383) protein is Oligoribonuclease.